Consider the following 288-residue polypeptide: MDGFINLLKPPGMTSHDVVAYVRKKLKTGKVGHLGTLDPAAAGVLPVAVGQATRLIEYLENVAMKEYLAEIVFGITTATWDMEGEILEQKDASFLTAGDIEKVLGHFHGEIEQTPPLASAVKVSGKPLYRYQRQGEKVEPPKRKVFIDSIELLEFLADKPQPAVRLYIRCSRGTYIRSIANEIGNLLKTGATLKFLLRTRSGPFLLDDSNLLHEDFTLIPPEQLFQDFPKINLTREQYLRVKNGGGVKVETKGENFGPVFAYYGEKIIATGMICGQIFRPEKVFRFGE.

Asp-38 acts as the Nucleophile in catalysis.

This sequence belongs to the pseudouridine synthase TruB family. Type 1 subfamily.

The catalysed reaction is uridine(55) in tRNA = pseudouridine(55) in tRNA. Responsible for synthesis of pseudouridine from uracil-55 in the psi GC loop of transfer RNAs. This Carboxydothermus hydrogenoformans (strain ATCC BAA-161 / DSM 6008 / Z-2901) protein is tRNA pseudouridine synthase B.